A 103-amino-acid polypeptide reads, in one-letter code: Large ribosomal subunit protein bL21 (103 aa).

Belongs to the bacterial ribosomal protein bL21 family. Part of the 50S ribosomal subunit. Contacts protein L20.

Its function is as follows. This protein binds to 23S rRNA in the presence of protein L20. This Actinobacillus pleuropneumoniae serotype 7 (strain AP76) protein is Large ribosomal subunit protein bL21.